A 455-amino-acid chain; its full sequence is Argininosuccinate lyase (455 aa).

The protein belongs to the lyase 1 family. Argininosuccinate lyase subfamily.

The protein localises to the cytoplasm. The catalysed reaction is 2-(N(omega)-L-arginino)succinate = fumarate + L-arginine. The protein operates within amino-acid biosynthesis; L-arginine biosynthesis; L-arginine from L-ornithine and carbamoyl phosphate: step 3/3. This chain is Argininosuccinate lyase, found in Shewanella denitrificans (strain OS217 / ATCC BAA-1090 / DSM 15013).